Reading from the N-terminus, the 429-residue chain is 3-phosphoshikimate 1-carboxyvinyltransferase (429 aa).

3-phosphoshikimate contacts are provided by Lys-23, Ser-24, and Arg-28. Lys-23 contributes to the phosphoenolpyruvate binding site. Positions 97 and 125 each coordinate phosphoenolpyruvate. 3-phosphoshikimate is bound by residues Ser-170, Ser-171, Gln-172, Ser-198, Asp-314, Asn-338, and Lys-342. Residue Gln-172 coordinates phosphoenolpyruvate. Asp-314 serves as the catalytic Proton acceptor. Residues Arg-346, Arg-388, and Lys-413 each coordinate phosphoenolpyruvate.

The protein belongs to the EPSP synthase family. In terms of assembly, monomer.

The protein localises to the cytoplasm. It carries out the reaction 3-phosphoshikimate + phosphoenolpyruvate = 5-O-(1-carboxyvinyl)-3-phosphoshikimate + phosphate. It participates in metabolic intermediate biosynthesis; chorismate biosynthesis; chorismate from D-erythrose 4-phosphate and phosphoenolpyruvate: step 6/7. Its function is as follows. Catalyzes the transfer of the enolpyruvyl moiety of phosphoenolpyruvate (PEP) to the 5-hydroxyl of shikimate-3-phosphate (S3P) to produce enolpyruvyl shikimate-3-phosphate and inorganic phosphate. In Pectobacterium carotovorum subsp. carotovorum (strain PC1), this protein is 3-phosphoshikimate 1-carboxyvinyltransferase.